A 375-amino-acid chain; its full sequence is Succinyl-diaminopimelate desuccinylase (375 aa).

His66 serves as a coordination point for Zn(2+). Asp68 is an active-site residue. Asp99 contacts Zn(2+). The active-site Proton acceptor is the Glu133. Residues Glu134, Glu162, and His348 each coordinate Zn(2+).

Belongs to the peptidase M20A family. DapE subfamily. Homodimer. It depends on Zn(2+) as a cofactor. Requires Co(2+) as cofactor.

It carries out the reaction N-succinyl-(2S,6S)-2,6-diaminopimelate + H2O = (2S,6S)-2,6-diaminopimelate + succinate. Its pathway is amino-acid biosynthesis; L-lysine biosynthesis via DAP pathway; LL-2,6-diaminopimelate from (S)-tetrahydrodipicolinate (succinylase route): step 3/3. In terms of biological role, catalyzes the hydrolysis of N-succinyl-L,L-diaminopimelic acid (SDAP), forming succinate and LL-2,6-diaminopimelate (DAP), an intermediate involved in the bacterial biosynthesis of lysine and meso-diaminopimelic acid, an essential component of bacterial cell walls. This Salmonella typhi protein is Succinyl-diaminopimelate desuccinylase.